Consider the following 416-residue polypeptide: MKSYLVGGAVRDALLGQPAGDCDWVVVGADPAHMESLGFKAVGRDFPVFLHPKTGEEFALARTERKNGHGYRGFIVNADPTVTLEQDLQRRDFTINAIAHDQTNDTLIDPYGGVNDLEQRILRHISPAFAEDPLRVLRAARFMARLAPLGFSIAPETLTMMREMAASGELNSLIPERIWKELSRSLAYTQPAAFLHTLRTVNALEVVLPELNALYGVPQHADYHPEIDTGLHQELVSDMAAKLAPGDMLIGFAALCHDLGKALTPRATWPHHPMHEQRGMAPTQQLSERLKVPRDYQQLALIACREHLNVHRLSKLHDHTVYELLQRCDAFRRPERIAQLAIVCEADYRGRYGHEDANYPQGQHLCRLHAAALAVNARDLNRQDLHGTQIGEALAQARIRAISSTGVYDGGTRTNF.

ATP contacts are provided by G8 and R11. CTP contacts are provided by G8 and R11. The Mg(2+) site is built by D21 and D23. The ATP site is built by R91, R138, and R141. CTP contacts are provided by R91, R138, and R141. Residues 229 to 331 (TGLHQELVSD…YELLQRCDAF (103 aa)) enclose the HD domain.

This sequence belongs to the tRNA nucleotidyltransferase/poly(A) polymerase family. Bacterial CCA-adding enzyme type 1 subfamily. In terms of assembly, monomer. Can also form homodimers and oligomers. Mg(2+) serves as cofactor. Requires Ni(2+) as cofactor.

It carries out the reaction a tRNA precursor + 2 CTP + ATP = a tRNA with a 3' CCA end + 3 diphosphate. It catalyses the reaction a tRNA with a 3' CCA end + 2 CTP + ATP = a tRNA with a 3' CCACCA end + 3 diphosphate. In terms of biological role, catalyzes the addition and repair of the essential 3'-terminal CCA sequence in tRNAs without using a nucleic acid template. Adds these three nucleotides in the order of C, C, and A to the tRNA nucleotide-73, using CTP and ATP as substrates and producing inorganic pyrophosphate. tRNA 3'-terminal CCA addition is required both for tRNA processing and repair. Also involved in tRNA surveillance by mediating tandem CCA addition to generate a CCACCA at the 3' terminus of unstable tRNAs. While stable tRNAs receive only 3'-terminal CCA, unstable tRNAs are marked with CCACCA and rapidly degraded. This chain is Multifunctional CCA protein, found in Xylella fastidiosa (strain 9a5c).